A 247-amino-acid chain; its full sequence is Proteasome subunit alpha type-7-1 (247 aa).

The protein belongs to the peptidase T1A family. In terms of assembly, the 26S proteasome consists of a 20S proteasome core and two 19S regulatory subunits. The 20S proteasome core is composed of 28 subunits that are arranged in four stacked rings, resulting in a barrel-shaped structure. The two end rings are each formed by seven alpha subunits, and the two central rings are each formed by seven beta subunits. The catalytic chamber with the active sites is on the inside of the barrel.

It is found in the cytoplasm. The protein localises to the nucleus. Its function is as follows. The proteasome is a multicatalytic proteinase complex which is characterized by its ability to cleave peptides with Arg, Phe, Tyr, Leu, and Glu adjacent to the leaving group at neutral or slightly basic pH. The proteasome has an ATP-dependent proteolytic activity. The chain is Proteasome subunit alpha type-7-1 (Pros28.1) from Drosophila virilis (Fruit fly).